We begin with the raw amino-acid sequence, 178 residues long: Dual-action ribosomal maturation protein DarP (178 aa).

The protein belongs to the DarP family.

Its subcellular location is the cytoplasm. Its function is as follows. Member of a network of 50S ribosomal subunit biogenesis factors which assembles along the 30S-50S interface, preventing incorrect 23S rRNA structures from forming. Promotes peptidyl transferase center (PTC) maturation. The sequence is that of Dual-action ribosomal maturation protein DarP from Haemophilus influenzae (strain 86-028NP).